The following is a 196-amino-acid chain: MQERIKACFTESIQTQIAAAEALPDAISRAAMTLVQSLLNGNKILCCGNGTSAANAQHFAASMINRFETERPSLPAIALNTDNVVLTAIANDRLHDEVYAKQVRALGHAGDVLLAISARGNSRDIVKAVEAAVTRDMTIVALTGYDGGELAGLLGPQDVEIRIPSHRSARIQEMHMLTVNCLCDLIDNTLFPHQDD.

Residues 34 to 196 (LVQSLLNGNK…DNTLFPHQDD (163 aa)) form the SIS domain.

The protein belongs to the SIS family. DiaA subfamily. Homotetramer; dimer of dimers.

Required for the timely initiation of chromosomal replication via direct interactions with the DnaA initiator protein. The chain is DnaA initiator-associating protein DiaA from Shigella flexneri serotype 5b (strain 8401).